Consider the following 342-residue polypeptide: Serine/threonine-protein kinase ISR1 (342 aa).

The region spanning 59 to 342 is the Protein kinase domain; that stretch reads WRLTRVLGCG…SNARVAEHAF (284 aa). Residues 65-73 and Lys84 each bind ATP; that span reads LGCGSVACV. The active-site Proton acceptor is Asp190.

Belongs to the protein kinase superfamily. Ser/Thr protein kinase family.

It catalyses the reaction L-seryl-[protein] + ATP = O-phospho-L-seryl-[protein] + ADP + H(+). It carries out the reaction L-threonyl-[protein] + ATP = O-phospho-L-threonyl-[protein] + ADP + H(+). Functionally, probable serine/threonine protein kinase which may function redundantly with MPK1-independent branch of the PCK1 pathway. In Eremothecium gossypii (strain ATCC 10895 / CBS 109.51 / FGSC 9923 / NRRL Y-1056) (Yeast), this protein is Serine/threonine-protein kinase ISR1 (ISR1).